A 361-amino-acid polypeptide reads, in one-letter code: Peptide chain release factor 1 (361 aa).

Gln237 is modified (N5-methylglutamine). Residues 285–296 (DEKRRSAEESTR) show a composition bias toward basic and acidic residues. The disordered stretch occupies residues 285–305 (DEKRRSAEESTRRNLVSSGDR).

Belongs to the prokaryotic/mitochondrial release factor family. Post-translationally, methylated by PrmC. Methylation increases the termination efficiency of RF1.

It localises to the cytoplasm. Its function is as follows. Peptide chain release factor 1 directs the termination of translation in response to the peptide chain termination codons UAG and UAA. In Shewanella halifaxensis (strain HAW-EB4), this protein is Peptide chain release factor 1.